Here is a 593-residue protein sequence, read N- to C-terminus: Potassium channel KAT6 (593 aa).

Residues 1–33 (MAASRSELLRPAFGEPSPSLGPFVVNPHTCSYR) lie on the Cytoplasmic side of the membrane. A helical membrane pass occupies residues 34–54 (WWQKFLIVLVLYTAWASPFEL). Over 55–64 (AMEKSASAAL) the chain is Extracellular. A helical transmembrane segment spans residues 65–85 (AVTELVVDAFFAVDIAVSFFV). Over 86–106 (AYRDASTGLLVTDRKKIATRH) the chain is Cytoplasmic. A helical transmembrane segment spans residues 107–129 (LARPCLALDVASTIPLQMIYRIV). Residues 130-138 (SGKRQALYG) lie on the Extracellular side of the membrane. A helical; Voltage-sensor membrane pass occupies residues 139-159 (LLNLLRLWRLRRVSKLFARLE). At 160 to 173 (KDIRFSYLWTRLIK) the chain is on the cytoplasmic side. The helical transmembrane segment at 174–194 (LLYVTLFAVHFASCIYLWMAF) threads the bilayer. Residues 195-221 (HHKAKELTWIGSQFHGFEDRSVWFCYT) lie on the Extracellular side of the membrane. Positions 222 to 241 (CAVYWSITTLATVGYGDLHA) form an intramembrane region, pore-forming. Topologically, residues 242–247 (ANTGEM) are extracellular. Residues 248 to 268 (LFSIAFMLFNMGLTSYIIGNI) form a helical membrane-spanning segment. The Cytoplasmic segment spans residues 269 to 593 (TNLVVHETTN…RDGDHLFFSW (325 aa)). 350 to 470 (LFQGVSDKLV…VVVFSNFVLY (121 aa)) is a binding site for a nucleoside 3',5'-cyclic phosphate. Residues 522 to 593 (RVSIHEHLLN…RDGDHLFFSW (72 aa)) enclose the KHA domain.

Belongs to the potassium channel family. Plant (TC 1.A.1.4) subfamily.

It is found in the membrane. Probable inward-rectifying potassium channel. Assuming opened or closed conformations in response to the voltage difference across the membrane, the channel is activated by hyperpolarization. The protein is Potassium channel KAT6 of Oryza sativa subsp. japonica (Rice).